The sequence spans 294 residues: Cyclin-dependent kinase 5 homolog (294 aa).

The 283-residue stretch at 4–286 folds into the Protein kinase domain; that stretch reads YDKMEKIGEG…AEAAMQHPYF (283 aa). ATP contacts are provided by residues 10 to 18 and Lys-33; that span reads IGEGTYGTV. Thr-14 is subject to Phosphothreonine. Tyr-15 carries the phosphotyrosine modification. Catalysis depends on Asp-126, which acts as the Proton acceptor. A Phosphoserine modification is found at Ser-159.

It belongs to the protein kinase superfamily. CMGC Ser/Thr protein kinase family. CDC2/CDKX subfamily. Abundantly expressed in all adult tissues. Lower levels found in larvae and early embryos. Barely detectable in late embryos.

It catalyses the reaction L-seryl-[protein] + ATP = O-phospho-L-seryl-[protein] + ADP + H(+). The catalysed reaction is L-threonyl-[protein] + ATP = O-phospho-L-threonyl-[protein] + ADP + H(+). Probably involved in the control of the cell cycle. Interacts with D1 and D3-type G1 cyclins. Possible regulator of neuronal differentiation and/or development. This Drosophila melanogaster (Fruit fly) protein is Cyclin-dependent kinase 5 homolog (Cdk5).